The primary structure comprises 942 residues: UvrABC system protein A (942 aa).

32–39 provides a ligand contact to ATP; it reads GLSGSGKS. The C4-type zinc-finger motif lies at 251–278; that stretch reads CPVCGFTVPELEPRLFSFNAPFGSCPTC. ABC transporter domains follow at residues 308–589 and 609–937; these read WNPI…KKSI and GNGR…HYLK. Residue 641–648 coordinates ATP; it reads GVSGSGKS. A C4-type zinc finger spans residues 740-766; it reads CEACSGDGIIKIEMHFLPDVYVPCEVC.

The protein belongs to the ABC transporter superfamily. UvrA family. In terms of assembly, forms a heterotetramer with UvrB during the search for lesions.

The protein resides in the cytoplasm. The UvrABC repair system catalyzes the recognition and processing of DNA lesions. UvrA is an ATPase and a DNA-binding protein. A damage recognition complex composed of 2 UvrA and 2 UvrB subunits scans DNA for abnormalities. When the presence of a lesion has been verified by UvrB, the UvrA molecules dissociate. This Streptococcus pyogenes serotype M18 (strain MGAS8232) protein is UvrABC system protein A.